A 148-amino-acid chain; its full sequence is Prefoldin subunit 2 (148 aa).

Residues 87 to 114 are a coiled coil; it reads KDGLEEVVRKLYETLEKKKKDLTEFEAK. The span at 122 to 134 shows a compositional bias: basic and acidic residues; sequence QEDNKEGGNKKEG. A disordered region spans residues 122–148; it reads QEDNKEGGNKKEGNAQGVLVGAASSSQ.

Belongs to the prefoldin subunit beta family. Heterohexamer of two PFD-alpha type and four PFD-beta type subunits forming prefoldin co-chaperone complex. Interacts with LSM8, a specific subunit of the LSM2-8 complex, which is a core component of the spliceosome.

The protein resides in the cytoplasm. The protein localises to the nucleus. In terms of biological role, binds specifically to cytosolic chaperonin (c-CPN) and transfers target proteins to it. Binds to nascent polypeptide chain and promotes folding in an environment in which there are many competing pathways for nonnative proteins. Together with other chaperonins, contribute to the regulation of gene expression by modulating the spliceosome function on pre-mRNA splicing post-transcriptionally by acting as a co-chaperone of Hsp90 to control levels of LSM8. Required for microtubules (MTs) organization and dynamicity. Involved in the process leading to microtubules dissociation in response to gibberellic acid (GA) probably due to the DELLA proteins-mediated translocation of the prefoldin co-chaperone complex from the cytoplasm to the nucleus. The protein is Prefoldin subunit 2 of Arabidopsis thaliana (Mouse-ear cress).